The chain runs to 149 residues: Large ribosomal subunit protein bL9 (149 aa).

Belongs to the bacterial ribosomal protein bL9 family.

Binds to the 23S rRNA. The sequence is that of Large ribosomal subunit protein bL9 from Haemophilus ducreyi (strain 35000HP / ATCC 700724).